Here is a 758-residue protein sequence, read N- to C-terminus: Photosystem I P700 chlorophyll a apoprotein A1 (758 aa).

8 helical membrane-spanning segments follow: residues 78 to 101 (VFSA…FHGA), 164 to 187 (LYCT…FHYH), 203 to 227 (LNHH…HVSL), 299 to 317 (IAHH…GHMY), 354 to 377 (WHAQ…QHMY), 393 to 419 (LSLF…IFMV), 441 to 463 (AIIS…LYIH), and 539 to 557 (FLVH…LILL). [4Fe-4S] cluster contacts are provided by Cys-581 and Cys-590. Helical transmembrane passes span 597 to 618 (HVFL…HFSW) and 672 to 694 (LSAY…MFLF). His-683 provides a ligand contact to chlorophyll a'. The chlorophyll a site is built by Met-691 and Tyr-699. Trp-700 contacts phylloquinone. A helical membrane pass occupies residues 732–753 (AVGVTHYLLGGIATTWAFFLAR).

This sequence belongs to the PsaA/PsaB family. In terms of assembly, the PsaA/B heterodimer binds the P700 chlorophyll special pair and subsequent electron acceptors. PSI consists of a core antenna complex that captures photons, and an electron transfer chain that converts photonic excitation into a charge separation. The eukaryotic PSI reaction center is composed of at least 11 subunits. P700 is a chlorophyll a/chlorophyll a' dimer, A0 is one or more chlorophyll a, A1 is one or both phylloquinones and FX is a shared 4Fe-4S iron-sulfur center. is required as a cofactor.

The protein resides in the plastid. Its subcellular location is the chloroplast thylakoid membrane. The enzyme catalyses reduced [plastocyanin] + hnu + oxidized [2Fe-2S]-[ferredoxin] = oxidized [plastocyanin] + reduced [2Fe-2S]-[ferredoxin]. PsaA and PsaB bind P700, the primary electron donor of photosystem I (PSI), as well as the electron acceptors A0, A1 and FX. PSI is a plastocyanin-ferredoxin oxidoreductase, converting photonic excitation into a charge separation, which transfers an electron from the donor P700 chlorophyll pair to the spectroscopically characterized acceptors A0, A1, FX, FA and FB in turn. Oxidized P700 is reduced on the lumenal side of the thylakoid membrane by plastocyanin. The sequence is that of Photosystem I P700 chlorophyll a apoprotein A1 from Pisum sativum (Garden pea).